A 395-amino-acid chain; its full sequence is Syncephapepsin (395 aa).

An N-terminal signal peptide occupies residues 1–19; sequence MKFSLALLATVALATISQA. A propeptide spans 20-71 (activation peptide); the sequence is APVEKQVAGKPFQLVKNPHYQANATRAIFRAEKKYARHTAIPEQGKTIVKSA. The Peptidase A1 domain maps to 89-391; that stretch reads YYATVSVGTP…NQGVPEVQIA (303 aa). Aspartate 107 is a catalytic residue. A disulfide bridge connects residues cysteine 120 and cysteine 123. Aspartate 288 is an active-site residue. A disulfide bridge connects residues cysteine 322 and cysteine 355.

The protein belongs to the peptidase A1 family. In terms of assembly, monomer.

Functionally, hydrolysis of proteins with a broad specificity. Residues recognized to be cleaved were primarily those of trypsin and chymotrypsin and Lys was the most susceptible. The chain is Syncephapepsin (SPSR) from Syncephalastrum racemosum (Filamentous fungus).